The following is a 270-amino-acid chain: Type III pantothenate kinase (270 aa).

11–18 (DAGNSRIK) serves as a coordination point for ATP. Substrate is bound by residues Y96 and 103–106 (GSDR). The Proton acceptor role is filled by D105. Residue T129 participates in ATP binding. T195 contributes to the substrate binding site.

This sequence belongs to the type III pantothenate kinase family. Homodimer. The cofactor is NH4(+). K(+) is required as a cofactor.

It is found in the cytoplasm. The catalysed reaction is (R)-pantothenate + ATP = (R)-4'-phosphopantothenate + ADP + H(+). Its pathway is cofactor biosynthesis; coenzyme A biosynthesis; CoA from (R)-pantothenate: step 1/5. Functionally, catalyzes the phosphorylation of pantothenate (Pan), the first step in CoA biosynthesis. This Paraburkholderia phytofirmans (strain DSM 17436 / LMG 22146 / PsJN) (Burkholderia phytofirmans) protein is Type III pantothenate kinase.